We begin with the raw amino-acid sequence, 173 residues long: Large ribosomal subunit protein uL10 (173 aa).

It belongs to the universal ribosomal protein uL10 family. In terms of assembly, part of the ribosomal stalk of the 50S ribosomal subunit. The N-terminus interacts with L11 and the large rRNA to form the base of the stalk. The C-terminus forms an elongated spine to which L12 dimers bind in a sequential fashion forming a multimeric L10(L12)X complex.

Forms part of the ribosomal stalk, playing a central role in the interaction of the ribosome with GTP-bound translation factors. The polypeptide is Large ribosomal subunit protein uL10 (Beutenbergia cavernae (strain ATCC BAA-8 / DSM 12333 / CCUG 43141 / JCM 11478 / NBRC 16432 / NCIMB 13614 / HKI 0122)).